A 156-amino-acid polypeptide reads, in one-letter code: MPRKGPAPSRQLVKDPVYGDVLVSQLVNKVLLDGKKSTAERIVYGALEQCREKTGTDPILTLKKALDNVKPALEVRSRRVGGATYQVPVEVRPGRSTTLALRWLVTFTRQRRENTMTERLANEILDASNGLGASVKRREDTHKMAEANRAFAHYRW.

This sequence belongs to the universal ribosomal protein uS7 family. Part of the 30S ribosomal subunit. Contacts proteins S9 and S11.

Functionally, one of the primary rRNA binding proteins, it binds directly to 16S rRNA where it nucleates assembly of the head domain of the 30S subunit. Is located at the subunit interface close to the decoding center, probably blocks exit of the E-site tRNA. The protein is Small ribosomal subunit protein uS7 of Corynebacterium jeikeium (strain K411).